The primary structure comprises 181 residues: 6,7-dimethyl-8-ribityllumazine synthase 2 (181 aa).

Residues 1–23 are disordered; sequence MSLPMTETVTDPAETAPPTAERS. 5-amino-6-(D-ribitylamino)uracil contacts are provided by residues Trp-40, 74–76, 98–100, and Ser-129; these read SFE and LVV.

This sequence belongs to the DMRL synthase family.

It carries out the reaction (2S)-2-hydroxy-3-oxobutyl phosphate + 5-amino-6-(D-ribitylamino)uracil = 6,7-dimethyl-8-(1-D-ribityl)lumazine + phosphate + 2 H2O + H(+). It functions in the pathway cofactor biosynthesis; riboflavin biosynthesis; riboflavin from 2-hydroxy-3-oxobutyl phosphate and 5-amino-6-(D-ribitylamino)uracil: step 1/2. Its function is as follows. Catalyzes the formation of 6,7-dimethyl-8-ribityllumazine by condensation of 5-amino-6-(D-ribitylamino)uracil with 3,4-dihydroxy-2-butanone 4-phosphate. This is the penultimate step in the biosynthesis of riboflavin. This chain is 6,7-dimethyl-8-ribityllumazine synthase 2, found in Rhodopseudomonas palustris (strain ATCC BAA-98 / CGA009).